Consider the following 497-residue polypeptide: Glycerol kinase 2 (497 aa).

Position 13 (Thr13) interacts with ADP. ATP contacts are provided by Thr13, Thr14, and Ser15. Thr13 contacts sn-glycerol 3-phosphate. An ADP-binding site is contributed by Arg17. Residues Arg83, Glu84, Tyr134, and Asp241 each contribute to the sn-glycerol 3-phosphate site. Glycerol-binding residues include Arg83, Glu84, Tyr134, Asp241, and Gln242. ADP is bound by residues Thr263 and Gly305. 4 residues coordinate ATP: Thr263, Gly305, Gln309, and Gly406. Gly406 and Asn410 together coordinate ADP.

Belongs to the FGGY kinase family.

It catalyses the reaction glycerol + ATP = sn-glycerol 3-phosphate + ADP + H(+). Its pathway is polyol metabolism; glycerol degradation via glycerol kinase pathway; sn-glycerol 3-phosphate from glycerol: step 1/1. Its function is as follows. Key enzyme in the regulation of glycerol uptake and metabolism. Catalyzes the phosphorylation of glycerol to yield sn-glycerol 3-phosphate. The chain is Glycerol kinase 2 from Sulfolobus acidocaldarius (strain ATCC 33909 / DSM 639 / JCM 8929 / NBRC 15157 / NCIMB 11770).